The following is a 139-amino-acid chain: Short neuropeptide F (139 aa).

A propeptide spanning residues 1–23 is cleaved from the precursor; the sequence is MGRARRTVRAPAQHDALGGHALA. Residues 1-48 form a disordered region; that stretch reads MGRARRTVRAPAQHDALGGHALARKSVRSPSRRLRFGRRSDPDMPPQA. Residues 22–37 show a composition bias toward basic residues; it reads LARKSVRSPSRRLRFG. Phenylalanine amide is present on Phe-36. The propeptide occupies 40 to 62; sequence SDPDMPPQAPLDEMNELLSLREV. Phenylalanine amide is present on Phe-70. The propeptide occupies 74–96; that stretch reads SEERAVPHIFPQEFLTQEQDRAV. Phe-105 is subject to Phenylalanine amide. Positions 109 to 139 are excised as a propeptide; the sequence is SDNNMFLLPYESALPQEVKANGSVEDDRQQE.

It belongs to the NPY family. SNPF peptide 1: Expressed in corpora cardiaca (CC), corpora allata (CA), antennal lobe (AL) and gnathal ganglion (GNG) (at protein level). Expression in AL detected in all animals, in GNG in most animals, expression in CC and CA in some animals (at protein level). sNPF peptide 2: Expressed in corpora cardiaca (CC), corpora allata (CA), antennal lobe (AL) and gnathal ganglion (GNG) (at protein level). Expression in AL detected in all animals, in GNG, CC and CA in most animals (at protein level). sNPF peptide 3: Expressed in corpora cardiaca (CC), corpora allata (CA), antennal lobe (AL) and gnathal ganglion (GNG) (at protein level). Expression detected in all animals (at protein level).

The protein resides in the secreted. Its function is as follows. Plays a role in controlling food intake and regulating body size. The chain is Short neuropeptide F from Agrotis ipsilon (Black cutworm moth).